Consider the following 691-residue polypeptide: Pentatricopeptide repeat-containing protein At5g27110 (691 aa).

PPR repeat units follow at residues 38-68 (DVVLCKSLINVYFTCKDHCSARHVFENFDIR), 70-104 (DVYIWNSLMSGYSKNSMFHDTLEVFKRLLNCSICV), 106-140 (DSFTFPNVIKAYGALGREFLGRMIHTLVVKSGYVC), 141-171 (DVVVASSLVGMYAKFNLFENSLQVFDEMPER), 172-206 (DVASWNTVISCFYQSGEAEKALELFGRMESSGFEP), 207-241 (NSVSLTVAISACSRLLWLERGKEIHRKCVKKGFEL), 242-272 (DEYVNSALVDMYGKCDCLEVAREVFQKMPRK), 273-307 (SLVAWNSMIKGYVAKGDSKSCVEILNRMIIEGTRP), 308-342 (SQTTLTSILMACSRSRNLLHGKFIHGYVIRSVVNA), 343-373 (DIYVNCSLIDLYFKCGEANLAETVFSKTQKD), 374-408 (VAESWNVMISSYISVGNWFKAVEVYDQMVSVGVKP), 409-443 (DVVTFTSVLPACSQLAALEKGKQIHLSISESRLET), 444-474 (DELLLSALLDMYSKCGNEKEAFRIFNSIPKK), 475-509 (DVVSWTVMISAYGSHGQPREALYQFDEMQKFGLKP), 510-540 (DGVTLLAVLSACGHAGLIDEGLKFFSQMRSK), and 546-576 (IIEHYSCMIDILGRAGRLLEAYEIIQQTPET). The segment at 582–657 (LLSTLFSACC…KPGCSWIEMS (76 aa)) is type E motif. The tract at residues 658 to 688 (DKVCHFFAEDRSHLRAENVYECLALLSGHME) is type E(+) motif.

Belongs to the PPR family. PCMP-E subfamily.

In Arabidopsis thaliana (Mouse-ear cress), this protein is Pentatricopeptide repeat-containing protein At5g27110 (PCMP-E14).